The sequence spans 484 residues: MEQYLPQAKEFISFIDKSPSPYHAVQYFSEILKSKGFIHLSEKQMWDIQPNKKYFFTRNQSCISAFAVGGKYKPGNGFNIAAAHTDSPNFKVRPVSKVESVGYQQVGVETYGGGLWYTWFDRDLTVAGRVIVKSGDGSYESKLVHIKKPILRIPSLAIHLDRSVNTDGFKYNTQNHLVPMIASKLSEPVESKSTTTTTTTESPKTSDPQDVNSSTTKHHAVLLELLSKELGCSVGDIQNFDLSVCDTQPAAIGGALDEFIFSPRCDNLGMSYCAMIGLLNVKESTLAQEENVLNVILFDNEEVGSSSPQGACAPLINDTISRVNSSMFASTCKPHELNNFIDLTLRNSFLISADMAHAIHPNYTANHEPLHRPALNKGPVIKYNANLRYASNGPTSFVILDICKKNGIPIQEFLVKNDSPCGSTIGPIISGTYGIRTVDIGNPQLSMHSIRETCGVADITHGINLIQKYFEQFTKLDIIKSDLE.

At Met1 the chain carries N-acetylmethionine. His84 is a binding site for Zn(2+). Residue His159 participates in substrate binding. Positions 188–206 (PVESKSTTTTTTTESPKTS) are enriched in low complexity. The tract at residues 188–213 (PVESKSTTTTTTTESPKTSDPQDVNS) is disordered. Asp266 lines the Zn(2+) pocket. Glu301 contacts substrate. Zn(2+)-binding residues include Glu302 and Asp354. 4 residues coordinate substrate: Asp354, His357, Lys382, and Tyr389. His448 contributes to the Zn(2+) binding site.

The protein belongs to the peptidase M18 family. Tetrahedron-shaped homododecamer built from six homodimers. The cofactor is Zn(2+).

Its subcellular location is the cytoplasm. The catalysed reaction is Release of an N-terminal aspartate or glutamate from a peptide, with a preference for aspartate.. Likely to play an important role in intracellular protein and peptide metabolism. This Dictyostelium discoideum (Social amoeba) protein is Aspartyl aminopeptidase (dnpep).